The primary structure comprises 191 residues: Glutathione-dependent formaldehyde-activating enzyme (191 aa).

One can recognise a CENP-V/GFA domain in the interval 22–169; it reads FAGGTLQCLC…LTELGLTPYD (148 aa). The Zn(2+) site is built by Cys29, Cys31, Cys50, Cys52, Cys55, Cys97, and Cys100.

It belongs to the Gfa family. The cofactor is Zn(2+).

The enzyme catalyses S-(hydroxymethyl)glutathione = glutathione + formaldehyde. It participates in one-carbon metabolism; formaldehyde degradation; formate from formaldehyde (glutathione route): step 1/3. Its function is as follows. Catalyzes the condensation of formaldehyde and glutathione to S-hydroxymethylglutathione. In Xanthomonas campestris pv. campestris (strain B100), this protein is Glutathione-dependent formaldehyde-activating enzyme.